Here is a 310-residue protein sequence, read N- to C-terminus: Lipoyl synthase (310 aa).

The [4Fe-4S] cluster site is built by Cys-45, Cys-50, Cys-56, Cys-71, Cys-75, Cys-78, and Ser-285. In terms of domain architecture, Radical SAM core spans 57–274 (WTKKHATVMI…GSIARAKGFL (218 aa)).

Belongs to the radical SAM superfamily. Lipoyl synthase family. [4Fe-4S] cluster is required as a cofactor.

Its subcellular location is the cytoplasm. It carries out the reaction [[Fe-S] cluster scaffold protein carrying a second [4Fe-4S](2+) cluster] + N(6)-octanoyl-L-lysyl-[protein] + 2 oxidized [2Fe-2S]-[ferredoxin] + 2 S-adenosyl-L-methionine + 4 H(+) = [[Fe-S] cluster scaffold protein] + N(6)-[(R)-dihydrolipoyl]-L-lysyl-[protein] + 4 Fe(3+) + 2 hydrogen sulfide + 2 5'-deoxyadenosine + 2 L-methionine + 2 reduced [2Fe-2S]-[ferredoxin]. The protein operates within protein modification; protein lipoylation via endogenous pathway; protein N(6)-(lipoyl)lysine from octanoyl-[acyl-carrier-protein]: step 2/2. Functionally, catalyzes the radical-mediated insertion of two sulfur atoms into the C-6 and C-8 positions of the octanoyl moiety bound to the lipoyl domains of lipoate-dependent enzymes, thereby converting the octanoylated domains into lipoylated derivatives. This is Lipoyl synthase from Novosphingobium aromaticivorans (strain ATCC 700278 / DSM 12444 / CCUG 56034 / CIP 105152 / NBRC 16084 / F199).